Reading from the N-terminus, the 454-residue chain is Protein IQ-DOMAIN 1 (454 aa).

The interval 103–113 is calmodulin-binding; the sequence is GKSKEEAAAIL. Residues 107 to 136 form the IQ domain; it reads EEAAAILIQSTFRGHLARRESQVMRGQERL. The interval 272–454 is disordered; sequence WESSEKEQNT…KGVLKAERTP (183 aa). Residues 280–328 are compositionally biased toward polar residues; the sequence is NTTNNDNSSVKNSTNRNSQGGETAKSSNRNKLNSSTKPNTPSASSTATR. Basic and acidic residues predominate over residues 343 to 356; that stretch reads KSSDDEAKSSERNR. Over residues 371 to 388 the composition is skewed to polar residues; that stretch reads LSSSTARRSSNLIPTTKS. A compositionally biased stretch (low complexity) spans 397–412; that stretch reads TSSRVAVTTSTTEESS. The Nuclear localization signal motif lies at 421–428; that stretch reads KKRLSTSA. Residues 442-454 are compositionally biased toward basic and acidic residues; that stretch reads KVEKGVLKAERTP.

The protein belongs to the IQD family. In terms of assembly, binds to multiple calmodulin (CaM) in the presence of Ca(2+)(e.g. CaM1 and CaM2) and CaM-like (e.g. CML8 and CML9) proteins. Interacts with KLCR1. In terms of tissue distribution, expressed in roots, flowers, stems, siliques, inflorescence stems and whole shoots. Restricted to the vascular bundles.

It localises to the nucleus. The protein localises to the nucleolus. It is found in the cytoplasm. The protein resides in the cytoskeleton. Its function is as follows. May be involved in cooperative interactions with calmodulins or calmodulin-like proteins. Modulates expression of glucosinolate pathway genes. May associate with nucleic acids and regulate gene expression at the transcriptional or post-transcriptional level. Recruits KLCR1 and calmodulin proteins to microtubules, thus being a potential scaffold in cellular signaling and trafficking. The chain is Protein IQ-DOMAIN 1 from Arabidopsis thaliana (Mouse-ear cress).